The sequence spans 72 residues: Brevinin-2GHb (72 aa).

The first 22 residues, 1–22 (MFTMKKSLLLLFFLGTVSLSLC), serve as a signal peptide directing secretion. Residues 23–42 (EQERGADEDDGGEMTEELKR) constitute a propeptide that is removed on maturation. A disulfide bridge links C66 with C72.

In terms of tissue distribution, expressed by the skin glands.

The protein resides in the secreted. Functionally, antimicrobial peptide. Active against the Gram-positive bacteria S.aureus FDA209P (MIC=16.5 ug/ml) and B.subtilis ATCC 6633 (MIC&gt;64 ug/ml), and the Gram-negative bacteria E.coli O111 (MIC=8.2 ug/ml) and E.coli ATCC 25922 (MIC=8.2 ug/ml). Not active against the fungus C.albicans. This chain is Brevinin-2GHb, found in Sylvirana guentheri (Gunther's frog).